Consider the following 4717-residue polypeptide: Midasin (4717 aa).

6 AAA-ATPase protomer regions span residues 149-384 (LVQK…FGAF), 458-797 (EQLA…GLRR), 871-1131 (EHYI…QEVI), 1157-1448 (SLKE…NACE), 1552-1811 (VLRA…EVFD), and 1858-2106 (VLES…FLLK). Residues 159–166 (GPEGIGKK) and 474–481 (GETGTGKT) contribute to the ATP site. Position 593 is a phosphoserine (Ser593). Residues 901-908 (GPTSSGKT), 1193-1200 (GDTGCGKT), 1566-1573 (GSPGVGKT), and 1876-1883 (GDTATGKT) contribute to the ATP site. Residues 2173 to 3925 (KLLRKVLLTN…SGVGAEDITN (1753 aa)) form a linker region. Disordered stretches follow at residues 3898-3924 (PQEG…EDIT), 3936-4283 (LANE…LGDH), and 4295-4365 (EWED…EVGD). 2 stretches are compositionally biased toward acidic residues: residues 3936–3950 (LANE…DLDE) and 3973–3993 (ENSD…DIPE). Residues 4020–4030 (NEQSAANNESD) show a composition bias toward polar residues. A compositionally biased stretch (basic and acidic residues) spans 4031 to 4049 (LVSKEDDNKALEDKDRQEK). Positions 4050–4066 (EDEEEMSDDVGIDDEIQ) are enriched in acidic residues. The segment covering 4080–4103 (NEDHLDLPEDLKLDEKEGDVSKDS) has biased composition (basic and acidic residues). Composition is skewed to acidic residues over residues 4104–4177 (DLED…ESTE), 4184–4196 (EELE…EDQA), and 4226–4236 (ENEELGEEDGA). 2 stretches are compositionally biased toward basic and acidic residues: residues 4258–4275 (QKGE…EADR) and 4329–4342 (AEKD…RDES). Over residues 4343-4355 (ANQNPDSMNSTNI) the composition is skewed to polar residues. A VWFA domain is found at 4505–4707 (QVMISIDDSK…ELPQLLSSAL (203 aa)).

It belongs to the midasin family. As to quaternary structure, associates with pre-60S ribosomes in the nucleoplasm.

Its subcellular location is the nucleus. The protein resides in the nucleolus. It localises to the nucleoplasm. Its function is as follows. Nuclear chaperone required for maturation and nuclear export of pre-60S ribosome subunits. Functions at successive maturation steps to remove ribosomal factors at critical transition points, first driving the exit of early pre-60S particles from the nucleolus and then driving late pre-60S particles from the nucleus. This chain is Midasin (mdn1), found in Schizosaccharomyces pombe (strain 972 / ATCC 24843) (Fission yeast).